The following is a 357-amino-acid chain: Metacaspase-3 (357 aa).

The active site involves histidine 168. Aspartate 183, aspartate 199, and aspartate 200 together coordinate Ca(2+). The active site involves cysteine 223. A Ca(2+)-binding site is contributed by aspartate 230.

The protein belongs to the peptidase C14B family.

The protein resides in the recycling endosome. Activated by Ca(2+). Functionally, cysteine protease that cleaves specifically after arginine or lysine residues. In the bloodstream form, may cleave inactive metacaspase-4 MCA4 prior to MCA4 secretion. The sequence is that of Metacaspase-3 from Trypanosoma brucei brucei.